We begin with the raw amino-acid sequence, 376 residues long: Histidinol-phosphate aminotransferase (376 aa).

The disordered stretch occupies residues 1–21 (MQPRDLSAHEPYVPGRGTKEV). Position 222 is an N6-(pyridoxal phosphate)lysine (lysine 222).

It belongs to the class-II pyridoxal-phosphate-dependent aminotransferase family. Histidinol-phosphate aminotransferase subfamily. It depends on pyridoxal 5'-phosphate as a cofactor.

The catalysed reaction is L-histidinol phosphate + 2-oxoglutarate = 3-(imidazol-4-yl)-2-oxopropyl phosphate + L-glutamate. Its pathway is amino-acid biosynthesis; L-histidine biosynthesis; L-histidine from 5-phospho-alpha-D-ribose 1-diphosphate: step 7/9. This chain is Histidinol-phosphate aminotransferase, found in Haloquadratum walsbyi (strain DSM 16790 / HBSQ001).